The sequence spans 442 residues: UDP-N-acetylmuramate--L-alanine ligase (442 aa).

110-116 (GAHGKTS) provides a ligand contact to ATP.

The protein belongs to the MurCDEF family.

It localises to the cytoplasm. It carries out the reaction UDP-N-acetyl-alpha-D-muramate + L-alanine + ATP = UDP-N-acetyl-alpha-D-muramoyl-L-alanine + ADP + phosphate + H(+). It functions in the pathway cell wall biogenesis; peptidoglycan biosynthesis. Cell wall formation. This chain is UDP-N-acetylmuramate--L-alanine ligase, found in Streptococcus thermophilus (strain ATCC BAA-491 / LMD-9).